The chain runs to 391 residues: Lipid-A-disaccharide synthase (391 aa).

It belongs to the LpxB family.

It carries out the reaction a lipid X + a UDP-2-N,3-O-bis[(3R)-3-hydroxyacyl]-alpha-D-glucosamine = a lipid A disaccharide + UDP + H(+). The protein operates within bacterial outer membrane biogenesis; LPS lipid A biosynthesis. Its function is as follows. Condensation of UDP-2,3-diacylglucosamine and 2,3-diacylglucosamine-1-phosphate to form lipid A disaccharide, a precursor of lipid A, a phosphorylated glycolipid that anchors the lipopolysaccharide to the outer membrane of the cell. The sequence is that of Lipid-A-disaccharide synthase from Azoarcus sp. (strain BH72).